The chain runs to 223 residues: MOB-like protein phocein (223 aa).

The tract at residues 1 to 23 is disordered; the sequence is MTAATENRTVRRNGPGTKRADWN. Positions 92, 97, 169, and 174 each coordinate Zn(2+).

This sequence belongs to the MOB1/phocein family.

The protein resides in the cytoplasm. Its subcellular location is the perinuclear region. It is found in the membrane. The protein localises to the golgi apparatus. It localises to the golgi stack membrane. Its function is as follows. May play a role in membrane trafficking, specifically in membrane budding reactions. The polypeptide is MOB-like protein phocein (Caenorhabditis elegans).